The chain runs to 483 residues: UDP-N-acetylmuramoyl-L-alanyl-D-glutamate--2,6-diaminopimelate ligase (483 aa).

Ser-30 contributes to the UDP-N-acetyl-alpha-D-muramoyl-L-alanyl-D-glutamate binding site. Residue 109–115 coordinates ATP; that stretch reads GTNGKTT. Residues 151 to 152, Ser-178, and Arg-186 contribute to the UDP-N-acetyl-alpha-D-muramoyl-L-alanyl-D-glutamate site; that span reads TT. Residue Lys-218 is modified to N6-carboxylysine. Residues Arg-380, 403–406, Gly-453, and Glu-457 contribute to the meso-2,6-diaminopimelate site; that span reads DNPR. Residues 403–406 carry the Meso-diaminopimelate recognition motif motif; that stretch reads DNPR.

The protein belongs to the MurCDEF family. MurE subfamily. Mg(2+) is required as a cofactor. In terms of processing, carboxylation is probably crucial for Mg(2+) binding and, consequently, for the gamma-phosphate positioning of ATP.

It is found in the cytoplasm. The enzyme catalyses UDP-N-acetyl-alpha-D-muramoyl-L-alanyl-D-glutamate + meso-2,6-diaminopimelate + ATP = UDP-N-acetyl-alpha-D-muramoyl-L-alanyl-gamma-D-glutamyl-meso-2,6-diaminopimelate + ADP + phosphate + H(+). It functions in the pathway cell wall biogenesis; peptidoglycan biosynthesis. In terms of biological role, catalyzes the addition of meso-diaminopimelic acid to the nucleotide precursor UDP-N-acetylmuramoyl-L-alanyl-D-glutamate (UMAG) in the biosynthesis of bacterial cell-wall peptidoglycan. The protein is UDP-N-acetylmuramoyl-L-alanyl-D-glutamate--2,6-diaminopimelate ligase of Chlamydia trachomatis serovar A (strain ATCC VR-571B / DSM 19440 / HAR-13).